A 223-amino-acid polypeptide reads, in one-letter code: Cytidylate kinase (223 aa).

10–18 contacts ATP; the sequence is GPASSGKST.

Belongs to the cytidylate kinase family. Type 1 subfamily.

It localises to the cytoplasm. It carries out the reaction CMP + ATP = CDP + ADP. The catalysed reaction is dCMP + ATP = dCDP + ADP. The chain is Cytidylate kinase from Streptococcus pneumoniae (strain Hungary19A-6).